We begin with the raw amino-acid sequence, 296 residues long: Probable ribosomal RNA small subunit methyltransferase A (296 aa).

The segment covering 1-16 has biased composition (polar residues); that stretch reads MTDATSGSDPDSTTPV. The segment at 1–25 is disordered; the sequence is MTDATSGSDPDSTTPVDLTGEDFRD. 6 residues coordinate S-adenosyl-L-methionine: histidine 44, leucine 46, glycine 72, glutamate 93, aspartate 121, and asparagine 136.

It belongs to the class I-like SAM-binding methyltransferase superfamily. rRNA adenine N(6)-methyltransferase family. RsmA subfamily.

The protein localises to the cytoplasm. In terms of biological role, specifically dimethylates two adjacent adenosines in the loop of a conserved hairpin near the 3'-end of 16S rRNA in the 30S particle. May play a critical role in biogenesis of 30S subunits. In Haloquadratum walsbyi (strain DSM 16790 / HBSQ001), this protein is Probable ribosomal RNA small subunit methyltransferase A.